Consider the following 365-residue polypeptide: Transcription factor aptf-1 (365 aa).

2 disordered regions span residues 13 to 40 and 93 to 126; these read EFVRGSQCDEEDEEEQQRQSSQRPPFYE and TPPQQQQQQGTGGSGEEDYCIPKSEDRDHSSNYS. An H-S-H (helix-span-helix), dimerization region spans residues 223 to 356; that stretch reads RRKQANVTAW…MIDESIKYID (134 aa).

Belongs to the AP-2 family. In terms of assembly, binds DNA as a dimer. As to expression, expressed in five interneurons AIB, RIB and RIS.

The protein localises to the nucleus. Its function is as follows. Transcription factor, which is required in the single sleep-active ring interneuron RIS for sleep-like behavioral quiescence induced by neuropeptide signaling in larvae. Regulates gene expression of sleep-inducing FMRFamide-like neuropeptide flp-11 in RIS. The sequence is that of Transcription factor aptf-1 from Caenorhabditis elegans.